Reading from the N-terminus, the 232-residue chain is Protein INAPERTURATE POLLEN 1 homolog (232 aa).

Interacts with LECRKS7/DAF1.

It localises to the cytoplasm. Functionally, required for pollen aperture formation, male fertility and LECRKS7/DAF1 function. Seems to be involved in operculum protrusion. Participates in the modification of plasma membrane at future aperture sites, possibly by creating close contact between the plasma membrane and callose wall to prevent primexine formation and sporopollenin deposition. The protein is Protein INAPERTURATE POLLEN 1 homolog of Oryza sativa subsp. japonica (Rice).